We begin with the raw amino-acid sequence, 357 residues long: tRNA N6-adenosine threonylcarbamoyltransferase (357 aa).

Residues His-115 and His-119 each coordinate Fe cation. Substrate contacts are provided by residues 137-141 (LASGG), Asp-170, Gly-183, and Asn-281. Asp-309 contacts Fe cation.

This sequence belongs to the KAE1 / TsaD family. It depends on Fe(2+) as a cofactor.

It localises to the cytoplasm. It catalyses the reaction L-threonylcarbamoyladenylate + adenosine(37) in tRNA = N(6)-L-threonylcarbamoyladenosine(37) in tRNA + AMP + H(+). Functionally, required for the formation of a threonylcarbamoyl group on adenosine at position 37 (t(6)A37) in tRNAs that read codons beginning with adenine. Is involved in the transfer of the threonylcarbamoyl moiety of threonylcarbamoyl-AMP (TC-AMP) to the N6 group of A37, together with TsaE and TsaB. TsaD likely plays a direct catalytic role in this reaction. In Bradyrhizobium diazoefficiens (strain JCM 10833 / BCRC 13528 / IAM 13628 / NBRC 14792 / USDA 110), this protein is tRNA N6-adenosine threonylcarbamoyltransferase.